We begin with the raw amino-acid sequence, 106 residues long: U1-lycotoxin-Ls1b (106 aa).

The first 19 residues, 1-19, serve as a signal peptide directing secretion; the sequence is MKVLVVVALLVTLISYSSS. A propeptide spanning residues 20 to 40 is cleaved from the precursor; sequence EGIDDPEADELLSLMANEQTR. Intrachain disulfides connect C43/C58, C50/C67, C57/C85, and C69/C83.

The protein belongs to the neurotoxin 19 (CSTX) family. 04 (U1-Lctx) subfamily. Expressed by the venom gland.

Its subcellular location is the secreted. This is U1-lycotoxin-Ls1b from Lycosa singoriensis (Wolf spider).